A 130-amino-acid polypeptide reads, in one-letter code: Small ribosomal subunit protein eS17 (130 aa).

This sequence belongs to the eukaryotic ribosomal protein eS17 family.

The polypeptide is Small ribosomal subunit protein eS17 (RPS17) (Theileria parva (East coast fever infection agent)).